The sequence spans 89 residues: DNA/RNA-binding protein Alba (89 aa).

It belongs to the histone-like Alba family.

It localises to the cytoplasm. The protein localises to the chromosome. Binds double-stranded DNA tightly but without sequence specificity. Involved in DNA compaction. The sequence is that of DNA/RNA-binding protein Alba from Methanothrix thermoacetophila (strain DSM 6194 / JCM 14653 / NBRC 101360 / PT) (Methanosaeta thermophila).